The sequence spans 44 residues: MDSIATNTHSSSIVNAYNNNPTDVVKTQNIKNYTPKVPYMCVIA.

A propeptide spanning residues 1–32 is cleaved from the precursor; sequence MDSIATNTHSSSIVNAYNNNPTDVVKTQNIKN. Residue Cys-41 is modified to Cysteine methyl ester. A lipid anchor (S-farnesyl cysteine) is attached at Cys-41. Positions 42-44 are cleaved as a propeptide — removed in mature form; the sequence is VIA.

The protein localises to the secreted. In terms of biological role, M-factor is a mating pheromone produced by M-type mating cells. All three mfm genes contribute to the production of M-factor. The sequence is that of M-factor (mfm2) from Schizosaccharomyces pombe (strain 972 / ATCC 24843) (Fission yeast).